Reading from the N-terminus, the 429-residue chain is Ribosomal RNA small subunit methyltransferase B (429 aa).

Residues 254-260 (CAAPGGK), aspartate 277, aspartate 303, and aspartate 322 each bind S-adenosyl-L-methionine. Cysteine 375 acts as the Nucleophile in catalysis.

The protein belongs to the class I-like SAM-binding methyltransferase superfamily. RsmB/NOP family.

The protein localises to the cytoplasm. The enzyme catalyses cytidine(967) in 16S rRNA + S-adenosyl-L-methionine = 5-methylcytidine(967) in 16S rRNA + S-adenosyl-L-homocysteine + H(+). Functionally, specifically methylates the cytosine at position 967 (m5C967) of 16S rRNA. The chain is Ribosomal RNA small subunit methyltransferase B from Serratia proteamaculans (strain 568).